The following is a 208-amino-acid chain: dITP/XTP pyrophosphatase (208 aa).

Residue 16 to 21 (SNNKGK) coordinates substrate. Residue Asp-79 is the Proton acceptor of the active site. Asp-79 contributes to the Mg(2+) binding site. Substrate-binding positions include Ser-80, 166–169 (FGYD), Lys-189, and 194–195 (HR).

It belongs to the HAM1 NTPase family. As to quaternary structure, homodimer. It depends on Mg(2+) as a cofactor.

The catalysed reaction is XTP + H2O = XMP + diphosphate + H(+). The enzyme catalyses dITP + H2O = dIMP + diphosphate + H(+). It catalyses the reaction ITP + H2O = IMP + diphosphate + H(+). Functionally, pyrophosphatase that catalyzes the hydrolysis of nucleoside triphosphates to their monophosphate derivatives, with a high preference for the non-canonical purine nucleotides XTP (xanthosine triphosphate), dITP (deoxyinosine triphosphate) and ITP. Seems to function as a house-cleaning enzyme that removes non-canonical purine nucleotides from the nucleotide pool, thus preventing their incorporation into DNA/RNA and avoiding chromosomal lesions. The chain is dITP/XTP pyrophosphatase from Acinetobacter baumannii (strain AB307-0294).